We begin with the raw amino-acid sequence, 918 residues long: Bromodomain testis-specific protein (918 aa).

The interval 1 to 26 (MSDVKPPQHFTMNGNPPPPEFKNPKK) is disordered. Residues 29 to 135 (RLTNHLQYIE…KLFLEKVAEM (107 aa)) form the Bromo 1 domain. Residues 204–215 (NGVKRKADTTTP) carry the Nuclear localization signal motif. Disordered regions lie at residues 241–267 (RGSG…GRRT), 379–430 (EPKN…RAHR), 575–712 (KNKP…SLVS), 738–764 (IPPL…SSSQ), and 862–899 (DTPK…AMSG). The region spanning 267 to 376 (TKLSERLKYC…DVFEFRFSKI (110 aa)) is the Bromo 2 domain. The segment covering 399 to 416 (SPSSSESSDSESSSPENS) has biased composition (low complexity). The stretch at 426–452 (ERAHRLASLEEQQLKAVREQLQLLTQT) forms a coiled coil. An NET domain is found at 496–578 (DSEEEMNTLP…GCLRKKKNKP (83 aa)). Positions 575–584 (KNKPPKKSKI) are enriched in basic residues. Basic and acidic residues predominate over residues 605-617 (KIETDGEIKDTTH). Composition is skewed to low complexity over residues 622 to 648 (SDSS…DSDS) and 739 to 764 (PPLL…SSSQ). A coiled-coil region spans residues 815–902 (EKELTTASRG…RREAMSGVID (88 aa)). The segment covering 877–896 (VDREREMARKREQERRRREA) has biased composition (basic and acidic residues).

The protein belongs to the BET family.

The protein localises to the nucleus. Functionally, testis-specific chromatin protein that specifically binds histone H4 acetylated at 'Lys-5' and 'Lys-8' (H4K5ac and H4K8ac, respectively) and plays a key role in spermatogenesis. Required in late pachytene spermatocytes: plays a role in meiotic and post-meiotic cells by binding to acetylated histones at the promoter of specific meiotic and post-meiotic genes, facilitating their activation at the appropriate time. In the post-meiotic phase of spermatogenesis, binds to hyperacetylated histones and participates in their general removal from DNA. Also recognizes and binds a subset of butyrylated histones: able to bind histone H4 butyrylated at 'Lys-8' (H4K8ac), while it is not able to bind H4 butyrylated at 'Lys-5' (H4K5ac). In Danio rerio (Zebrafish), this protein is Bromodomain testis-specific protein (brdt).